Consider the following 124-residue polypeptide: Holo-[acyl-carrier-protein] synthase (124 aa).

Residues D8 and E56 each contribute to the Mg(2+) site.

It belongs to the P-Pant transferase superfamily. AcpS family. It depends on Mg(2+) as a cofactor.

Its subcellular location is the cytoplasm. It catalyses the reaction apo-[ACP] + CoA = holo-[ACP] + adenosine 3',5'-bisphosphate + H(+). Transfers the 4'-phosphopantetheine moiety from coenzyme A to a Ser of acyl-carrier-protein. In Maridesulfovibrio salexigens (strain ATCC 14822 / DSM 2638 / NCIMB 8403 / VKM B-1763) (Desulfovibrio salexigens), this protein is Holo-[acyl-carrier-protein] synthase.